The following is a 400-amino-acid chain: Large envelope protein (400 aa).

Residue M1 is modified to N-acetylmethionine. Disordered regions lie at residues 1–20 (MGGW…SVPN) and 89–115 (STIP…LRDS). A lipid anchor (N-myristoyl glycine; by host) is attached at G2. Positions 2 to 119 (GGWSSKPRKG…PPLRDSHPQA (118 aa)) are pre-S1. Residues 2–174 (GGWSSKPRKG…SARTGDPVTN (173 aa)) are pre-S. Residues 2-181 (GGWSSKPRKG…VTNMENITSG (180 aa)) are Virion surface; in external conformation-facing. The Intravirion; in internal conformation portion of the chain corresponds to 2–253 (GGWSSKPRKG…PGYRWMCLRR (252 aa)). W4 carries N-linked (GlcNAc...) asparagine glycosylation. A compositionally biased stretch (polar residues) spans 89-106 (STIPPPASTNRQSGRQPT). Residues 120-174 (MQWNSTAFHQTLQDPRVRGLYLPAGGSSSGTVNPAPNIASHISSISARTGDPVTN) are pre-S2. The helical transmembrane segment at 182-202 (FLGPLLVLQAGFFLLTRILTI) threads the bilayer. Topologically, residues 203–253 (PQSLDSWWTSLNFLGGSPVCLGQNSQSPTSNHSPTSCPPICPGYRWMCLRR) are intravirion; in external conformation. The chain crosses the membrane as a helical span at residues 254 to 274 (FIIFLFILLLCLIFLLVLLDY). The Virion surface segment spans residues 275 to 348 (QGMLPVCPLI…WASVRFSWLS (74 aa)). N320 is a glycosylation site (N-linked (GlcNAc...) asparagine; by host; partial). Residues 349-369 (LLVPFVQWFVGLSPTVWLSAI) traverse the membrane as a helical segment. At 370 to 375 (WMMWYW) the chain is on the intravirion side. The chain crosses the membrane as a helical span at residues 376–398 (GPSLYSIVSPFIPLLPIFFCLWV). The Virion surface segment spans residues 399 to 400 (YI).

This sequence belongs to the orthohepadnavirus major surface antigen family. In its internal form (Li-HBsAg), interacts with the capsid protein and with the isoform S. Interacts with host chaperone CANX. In terms of assembly, associates with host chaperone CANX through its pre-S2 N glycan; this association may be essential for isoform M proper secretion. As to quaternary structure, interacts with isoform L. Interacts with the antigens of satellite virus HDV (HDVAgs); this interaction is required for encapsidation of HDV genomic RNA. Isoform M is N-terminally acetylated by host at a ratio of 90%, and N-glycosylated by host at the pre-S2 region. In terms of processing, myristoylated.

It is found in the virion membrane. Its function is as follows. The large envelope protein exists in two topological conformations, one which is termed 'external' or Le-HBsAg and the other 'internal' or Li-HBsAg. In its external conformation the protein attaches the virus to cell receptors and thereby initiating infection. This interaction determines the species specificity and liver tropism. This attachment induces virion internalization predominantly through caveolin-mediated endocytosis. The large envelope protein also assures fusion between virion membrane and endosomal membrane. In its internal conformation the protein plays a role in virion morphogenesis and mediates the contact with the nucleocapsid like a matrix protein. In terms of biological role, the middle envelope protein plays an important role in the budding of the virion. It is involved in the induction of budding in a nucleocapsid independent way. In this process the majority of envelope proteins bud to form subviral lipoprotein particles of 22 nm of diameter that do not contain a nucleocapsid. This chain is Large envelope protein, found in Hepatitis B virus genotype A2 subtype adw2 (strain Rutter 1979) (HBV-A).